The following is a 146-amino-acid chain: Hemoglobin subunit delta (146 aa).

Residues 2-146 (HLTGEEKSAV…VATALAHKYH (145 aa)) form the Globin domain. Position 50 is a phosphoserine (serine 50). Heme b-binding residues include histidine 63 and histidine 92.

It belongs to the globin family. As to quaternary structure, heterotetramer of two delta chains and two alpha chains. As to expression, red blood cells.

This Leontocebus nigricollis (Black-mantled tamarin) protein is Hemoglobin subunit delta (HBD).